Here is a 612-residue protein sequence, read N- to C-terminus: MVVSYNNNNNNNNNNNNNNISNNNNNNNMFPPFPSSDDFAMYQQSSSSGPYQETYASGPQNFGDAVYPMNGNFTLLPSDFTREPNDSFFYENDGIFDYQRIQQQPTQFQTKQRNDSQQQRFSQEQNFEIDNEVVHNNNRYYEYERSSNEVSPFDDENPNVLSDGMSPTIMATATAVTNANAPLPVNAQANNPLNFTSAPSRTVYLGNVPPNLSVKELLDHVRSGVVEDVKIIPEKMCAFVSFIDESAALLFHSDAILKRLNIGDRDIKIGWGKPTRIDPIVAARISTDGATRNVYIGRMTIEGEESHLSEEQLRVDLEEYGEIDCIKIIKEKGIAFIHFASILNAIKVVTNLPIRNPYYQNKRIFYGKDRCAFITKTQQHNAAQFLGVQPGMEHMIEFSDREFISNALLQQSAAAAAIATSAGGPNNLGNRTVYLGSLPKDVKIEEICNAVRGGLLQSIKLLNDRYVCFVTFIDPTAAAQFYAMSSLYGFTVQKKRCKVGWGKHSGPLPNALALAVSNGASRNVYVGNIDFVGDSLRDERVFTESNLRHIFQQYGEVEQINFLPEKNCCFINYTNISNAILALDKIKSNPYFKDLKINFGKDRCGNVPHQSR.

Residues 1 to 28 are compositionally biased toward low complexity; it reads MVVSYNNNNNNNNNNNNNNISNNNNNNN. Disordered regions lie at residues 1-57 and 105-125; these read MVVS…TYAS and PTQFQTKQRNDSQQQRFSQEQ. 2 stretches are compositionally biased toward polar residues: residues 42–57 and 115–125; these read YQQSSSSGPYQETYAS and DSQQQRFSQEQ. RRM domains are found at residues 201–274, 292–379, 431–504, and 522–602; these read RTVY…WGKP, RNVY…KTQQ, RTVY…WGKH, and RNVY…FGKD.

The protein localises to the cytoplasm. Functionally, RNA-binding protein that binds specific categories of mRNAs, including those that contain upstream open reading frames (uORFs) and internal ribosome entry sites (IRES). Probably involved in translational regulation. The polypeptide is RNA-binding protein MRN1 (MRN1) (Saccharomyces cerevisiae (strain ATCC 204508 / S288c) (Baker's yeast)).